The chain runs to 204 residues: Urease accessory protein UreG (204 aa).

11 to 18 (GPVGAGKT) lines the GTP pocket.

Belongs to the SIMIBI class G3E GTPase family. UreG subfamily. In terms of assembly, homodimer. UreD, UreF and UreG form a complex that acts as a GTP-hydrolysis-dependent molecular chaperone, activating the urease apoprotein by helping to assemble the nickel containing metallocenter of UreC. The UreE protein probably delivers the nickel.

It localises to the cytoplasm. Its function is as follows. Facilitates the functional incorporation of the urease nickel metallocenter. This process requires GTP hydrolysis, probably effectuated by UreG. The protein is Urease accessory protein UreG of Staphylococcus saprophyticus subsp. saprophyticus (strain ATCC 15305 / DSM 20229 / NCIMB 8711 / NCTC 7292 / S-41).